The chain runs to 102 residues: Membrane-bound protein LytA (102 aa).

The first 16 residues, 1 to 16 (MKKFIALLFFILLLSG), serve as a signal peptide directing secretion. Cysteine 17 carries the N-palmitoyl cysteine lipid modification. Cysteine 17 carries the S-diacylglycerol cysteine lipid modification.

It localises to the cell membrane. Functionally, possible role in the secretion of LytB and LytC. The protein is Membrane-bound protein LytA (lytA) of Bacillus subtilis (strain 168).